We begin with the raw amino-acid sequence, 133 residues long: MADERTSDSVKTRYDIALMKLNDIKIAVFRDSLSTYVEQKTGLTIQFNWPKSRCLVISTLCKIPFPTKSAAELQEMCKYQCFVSVLWCVILVFVVKIKLFFLLNKVRYYFAARKDCNYLDMFLSGERRLVMCA.

A helical transmembrane segment spans residues 82–102 (FVSVLWCVILVFVVKIKLFFL).

It is found in the membrane. The polypeptide is Protein U17 (U17/U16) (Homo sapiens (Human)).